A 424-amino-acid polypeptide reads, in one-letter code: Imidazolonepropionase (424 aa).

Fe(3+)-binding residues include His-84 and His-86. His-84 and His-86 together coordinate Zn(2+). Residues Arg-93, Tyr-156, and His-189 each coordinate 4-imidazolone-5-propanoate. Tyr-156 contacts N-formimidoyl-L-glutamate. His-254 contacts Fe(3+). Zn(2+) is bound at residue His-254. Glu-257 lines the 4-imidazolone-5-propanoate pocket. Asp-328 is a Fe(3+) binding site. Residue Asp-328 coordinates Zn(2+). Residues Asn-330 and Gly-332 each coordinate N-formimidoyl-L-glutamate. Ser-333 contributes to the 4-imidazolone-5-propanoate binding site.

The protein belongs to the metallo-dependent hydrolases superfamily. HutI family. Zn(2+) serves as cofactor. Fe(3+) is required as a cofactor.

The protein localises to the cytoplasm. It carries out the reaction 4-imidazolone-5-propanoate + H2O = N-formimidoyl-L-glutamate. It participates in amino-acid degradation; L-histidine degradation into L-glutamate; N-formimidoyl-L-glutamate from L-histidine: step 3/3. Functionally, catalyzes the hydrolytic cleavage of the carbon-nitrogen bond in imidazolone-5-propanoate to yield N-formimidoyl-L-glutamate. It is the third step in the universal histidine degradation pathway. This is Imidazolonepropionase from Geobacillus kaustophilus (strain HTA426).